Reading from the N-terminus, the 279-residue chain is Zinc-finger homeodomain protein 1 (279 aa).

Over residues 1 to 13 (MDFDDHDDGDEEM) the composition is skewed to acidic residues. Positions 1–47 (MDFDDHDDGDEEMPPMPVSSSYETPPQHGLAGGGMAPKPPGEIGSRV) are disordered. Residues 57–106 (YRECLKNHAVGIGGHAVDGCGEFMAAGEEGTIDALRCAACNCHRNFHRKE) form a ZF-HD dimerization-type; degenerate zinc finger. The segment at 168–190 (RPLALPSTSHSGRDDGDDLSGMV) is disordered. Positions 215–278 (KKRFRTKFTQ…NNKHTLGKKL (64 aa)) form a DNA-binding region, homeobox.

Homo- and heterodimer with other ZFHD proteins.

It is found in the nucleus. Functionally, putative transcription factor. The polypeptide is Zinc-finger homeodomain protein 1 (ZHD1) (Oryza sativa subsp. japonica (Rice)).